The chain runs to 212 residues: Thymidylate kinase (212 aa).

9–16 (GIDGCGKT) provides a ligand contact to ATP.

This sequence belongs to the thymidylate kinase family.

The catalysed reaction is dTMP + ATP = dTDP + ADP. In terms of biological role, phosphorylation of dTMP to form dTDP in both de novo and salvage pathways of dTTP synthesis. The sequence is that of Thymidylate kinase from Synechococcus sp. (strain CC9311).